The following is a 52-amino-acid chain: UPF0057 membrane protein YqaE (52 aa).

The next 2 helical transmembrane spans lie at Met-1–Lys-21 and Phe-23–Ile-43.

The protein belongs to the UPF0057 (PMP3) family.

Its subcellular location is the cell membrane. This Escherichia coli O157:H7 protein is UPF0057 membrane protein YqaE (yqaE).